We begin with the raw amino-acid sequence, 124 residues long: Small ribosomal subunit protein uS12 (124 aa).

D89 bears the 3-methylthioaspartic acid mark.

Belongs to the universal ribosomal protein uS12 family. Part of the 30S ribosomal subunit. Contacts proteins S8 and S17. May interact with IF1 in the 30S initiation complex.

Functionally, with S4 and S5 plays an important role in translational accuracy. Its function is as follows. Interacts with and stabilizes bases of the 16S rRNA that are involved in tRNA selection in the A site and with the mRNA backbone. Located at the interface of the 30S and 50S subunits, it traverses the body of the 30S subunit contacting proteins on the other side and probably holding the rRNA structure together. The combined cluster of proteins S8, S12 and S17 appears to hold together the shoulder and platform of the 30S subunit. This is Small ribosomal subunit protein uS12 from Koribacter versatilis (strain Ellin345).